The sequence spans 1755 residues: Transposon Ty1-PL Gag-Pol polyprotein (1755 aa).

Composition is skewed to polar residues over residues 1 to 23 (MESQ…SVTS), 48 to 60 (TKAN…TPAS), and 127 to 152 (QSQF…GNTF). 3 disordered regions span residues 1–93 (MESQ…MMTQ), 126–174 (PQSQ…PPPM), and 352–421 (GSRN…SKST). Over residues 153–165 (TDSSSADSDMTST) the composition is skewed to low complexity. Residues 299–401 (NNGIHINNKV…NSKSKTARAH (103 aa)) form an RNA-binding region. Residues 402–418 (NVSTSNNSPSTDNDSIS) are compositionally biased toward low complexity. S416 is modified (phosphoserine). D461 (for protease activity; shared with dimeric partner) is an active-site residue. The segment at 583-640 (NVHTSESTRKYPYPFIHRMLAHANAQTIRYSLKNNTITYFNESDVDWSSAIDYQCPDC) is integrase-type zinc finger-like. The 176-residue stretch at 660 to 835 (NSYEPFQYLH…AGLDISTLLP (176 aa)) folds into the Integrase catalytic domain. 2 residues coordinate Mg(2+): D671 and D736. 3 disordered regions span residues 956–1087 (SKAV…ETEK), 1092–1111 (RSPS…NIVP), and 1130–1187 (DLPL…DNET). Low complexity predominate over residues 960–969 (SPTDSTPPST). The span at 1005–1015 (STPQISNIEST) shows a compositional bias: polar residues. A compositionally biased stretch (basic and acidic residues) spans 1038–1053 (ESSHASKSKDFRHSDS). 2 stretches are compositionally biased toward polar residues: residues 1054 to 1082 (YSEN…QISD) and 1101 to 1111 (PENNSSHNIVP). Residues 1178–1212 (KKRSLEDNETEIKVSRDTWNTKNMRSLEPPRSKKR) carry the Bipartite nuclear localization signal motif. Positions 1338–1476 (NNYYITQLDI…DILGLEIKYQ (139 aa)) constitute a Reverse transcriptase Ty1/copia-type domain. Mg(2+)-binding residues include D1346, D1427, D1428, D1610, E1652, and D1685. Residues 1610–1752 (DASYGNQPYY…IKTFKLLTNK (143 aa)) form the RNase H Ty1/copia-type domain.

In terms of assembly, the capsid protein forms a homotrimer, from which the VLPs are assembled. The protease is a homodimer, whose active site consists of two apposed aspartic acid residues. Initially, virus-like particles (VLPs) are composed of the structural unprocessed proteins Gag and Gag-Pol, and also contain the host initiator methionine tRNA (tRNA(i)-Met) which serves as a primer for minus-strand DNA synthesis, and a dimer of genomic Ty RNA. Processing of the polyproteins occurs within the particle and proceeds by an ordered pathway, called maturation. First, the protease (PR) is released by autocatalytic cleavage of the Gag-Pol polyprotein yielding capsid protein p45 and a Pol-p154 precursor protein. This cleavage is a prerequisite for subsequent processing of Pol-p154 at the remaining sites to release the mature structural and catalytic proteins. Maturation takes place prior to the RT reaction and is required to produce transposition-competent VLPs.

The protein localises to the cytoplasm. It localises to the nucleus. The enzyme catalyses DNA(n) + a 2'-deoxyribonucleoside 5'-triphosphate = DNA(n+1) + diphosphate. It carries out the reaction Endonucleolytic cleavage to 5'-phosphomonoester.. In terms of biological role, capsid protein (CA) is the structural component of the virus-like particle (VLP), forming the shell that encapsulates the retrotransposons dimeric RNA genome. The particles are assembled from trimer-clustered units and there are holes in the capsid shells that allow for the diffusion of macromolecules. CA also has nucleocapsid-like chaperone activity, promoting primer tRNA(i)-Met annealing to the multipartite primer-binding site (PBS), dimerization of Ty1 RNA and initiation of reverse transcription. The aspartyl protease (PR) mediates the proteolytic cleavages of the Gag and Gag-Pol polyproteins after assembly of the VLP. Functionally, reverse transcriptase/ribonuclease H (RT) is a multifunctional enzyme that catalyzes the conversion of the retro-elements RNA genome into dsDNA within the VLP. The enzyme displays a DNA polymerase activity that can copy either DNA or RNA templates, and a ribonuclease H (RNase H) activity that cleaves the RNA strand of RNA-DNA heteroduplexes during plus-strand synthesis and hydrolyzes RNA primers. The conversion leads to a linear dsDNA copy of the retrotransposon that includes long terminal repeats (LTRs) at both ends. Its function is as follows. Integrase (IN) targets the VLP to the nucleus, where a subparticle preintegration complex (PIC) containing at least integrase and the newly synthesized dsDNA copy of the retrotransposon must transit the nuclear membrane. Once in the nucleus, integrase performs the integration of the dsDNA into the host genome. This chain is Transposon Ty1-PL Gag-Pol polyprotein (TY1B-PL), found in Saccharomyces cerevisiae (strain ATCC 204508 / S288c) (Baker's yeast).